A 297-amino-acid chain; its full sequence is Phosphatidylserine decarboxylase proenzyme (297 aa).

Active-site charge relay system; for autoendoproteolytic cleavage activity residues include Asp-92, His-149, and Ser-254. Ser-254 (schiff-base intermediate with substrate; via pyruvic acid; for decarboxylase activity) is an active-site residue. Position 254 is a pyruvic acid (Ser); by autocatalysis (Ser-254).

This sequence belongs to the phosphatidylserine decarboxylase family. PSD-B subfamily. Prokaryotic type I sub-subfamily. Heterodimer of a large membrane-associated beta subunit and a small pyruvoyl-containing alpha subunit. Pyruvate serves as cofactor. Is synthesized initially as an inactive proenzyme. Formation of the active enzyme involves a self-maturation process in which the active site pyruvoyl group is generated from an internal serine residue via an autocatalytic post-translational modification. Two non-identical subunits are generated from the proenzyme in this reaction, and the pyruvate is formed at the N-terminus of the alpha chain, which is derived from the carboxyl end of the proenzyme. The autoendoproteolytic cleavage occurs by a canonical serine protease mechanism, in which the side chain hydroxyl group of the serine supplies its oxygen atom to form the C-terminus of the beta chain, while the remainder of the serine residue undergoes an oxidative deamination to produce ammonia and the pyruvoyl prosthetic group on the alpha chain. During this reaction, the Ser that is part of the protease active site of the proenzyme becomes the pyruvoyl prosthetic group, which constitutes an essential element of the active site of the mature decarboxylase.

The protein resides in the cell membrane. It carries out the reaction a 1,2-diacyl-sn-glycero-3-phospho-L-serine + H(+) = a 1,2-diacyl-sn-glycero-3-phosphoethanolamine + CO2. It functions in the pathway phospholipid metabolism; phosphatidylethanolamine biosynthesis; phosphatidylethanolamine from CDP-diacylglycerol: step 2/2. Its function is as follows. Catalyzes the formation of phosphatidylethanolamine (PtdEtn) from phosphatidylserine (PtdSer). The polypeptide is Phosphatidylserine decarboxylase proenzyme (Bordetella parapertussis (strain 12822 / ATCC BAA-587 / NCTC 13253)).